Reading from the N-terminus, the 267-residue chain is Ribosomal RNA large subunit methyltransferase E (267 aa).

Residues glycine 52, phenylalanine 54, aspartate 72, aspartate 90, and aspartate 114 each coordinate S-adenosyl-L-methionine. Lysine 154 (proton acceptor) is an active-site residue. Positions 212 to 252 (EAPRAPAPPEQAAAPEEATAPATRAARQKPAPAKKPAAAKR) are enriched in low complexity. The interval 212 to 267 (EAPRAPAPPEQAAAPEEATAPATRAARQKPAPAKKPAAAKRPAARKRAAKKPARRA) is disordered. The span at 253 to 267 (PAARKRAAKKPARRA) shows a compositional bias: basic residues.

It belongs to the class I-like SAM-binding methyltransferase superfamily. RNA methyltransferase RlmE family.

It is found in the cytoplasm. It carries out the reaction uridine(2552) in 23S rRNA + S-adenosyl-L-methionine = 2'-O-methyluridine(2552) in 23S rRNA + S-adenosyl-L-homocysteine + H(+). Functionally, specifically methylates the uridine in position 2552 of 23S rRNA at the 2'-O position of the ribose in the fully assembled 50S ribosomal subunit. In Anaeromyxobacter dehalogenans (strain 2CP-C), this protein is Ribosomal RNA large subunit methyltransferase E.